A 476-amino-acid polypeptide reads, in one-letter code: MSRFSGALQLTDLDDFITPSQECIKPVTIDKTKSKTGSKITVQADGYYEESESGKQKLQKVEITLQDCLACSGCITSAEGVLITQQSQEELLKVLRENERLKASGDSDKVRTIVFTIAVQPLISLAHRFELGVEEAARHLSGYLRQLGADYVLSTKIADDLALLECRQEFVERYRDNADLSMLSSSCPGWVCYAEKTHGNFILPHIATTRSPQQIMGVLVKQRLAEKLGVSGSRIYHVTVMPCYDKKLEASREDFYSEVNSSRDVDCVITSIEVEQMLQTEEQTLQQFAPSDMDWPWTDQPPEAMVWAHESTMSGGYAEHIYKYAARELFNEETPNELQFKALRNRDFSEISLEKDGKIVLKFAIANGFRNIQNLMQKLKRGKGPGYHFVEVMACPSGCINGGAQVRPTTGQHVRELTQQLEELYKQLPRSNPDNAHTKHIYTDFLDGTQTDKSQSLLHTSYHAVEKLNTALNIKW.

[4Fe-4S] cluster is bound by residues Cys-23, Cys-68, Cys-71, Cys-74, Cys-187, Cys-243, Cys-395, and Cys-399.

Belongs to the NARF family.

Functionally, component of the cytosolic iron-sulfur (Fe/S) protein assembly machinery. Required for maturation of extramitochondrial Fe/S proteins. The polypeptide is Probable cytosolic Fe-S cluster assembly factor GI11683 (Drosophila mojavensis (Fruit fly)).